A 101-amino-acid polypeptide reads, in one-letter code: Nucleoid-associated protein Cla_0113 (101 aa).

It belongs to the YbaB/EbfC family. In terms of assembly, homodimer.

It is found in the cytoplasm. The protein localises to the nucleoid. Its function is as follows. Binds to DNA and alters its conformation. May be involved in regulation of gene expression, nucleoid organization and DNA protection. The polypeptide is Nucleoid-associated protein Cla_0113 (Campylobacter lari (strain RM2100 / D67 / ATCC BAA-1060)).